The chain runs to 462 residues: Chromosomal replication initiator protein DnaA (462 aa).

Positions methionine 1–asparagine 86 are domain I, interacts with DnaA modulators. The tract at residues asparagine 86–serine 125 is domain II. Residues asparagine 126 to alanine 342 are domain III, AAA+ region. Glycine 170, glycine 172, lysine 173, and threonine 174 together coordinate ATP. A domain IV, binds dsDNA region spans residues asparagine 343–serine 462.

The protein belongs to the DnaA family. As to quaternary structure, oligomerizes as a right-handed, spiral filament on DNA at oriC.

The protein resides in the cytoplasm. Functionally, plays an essential role in the initiation and regulation of chromosomal replication. ATP-DnaA binds to the origin of replication (oriC) to initiate formation of the DNA replication initiation complex once per cell cycle. Binds the DnaA box (a 9 base pair repeat at the origin) and separates the double-stranded (ds)DNA. Forms a right-handed helical filament on oriC DNA; dsDNA binds to the exterior of the filament while single-stranded (ss)DNA is stabiized in the filament's interior. The ATP-DnaA-oriC complex binds and stabilizes one strand of the AT-rich DNA unwinding element (DUE), permitting loading of DNA polymerase. After initiation quickly degrades to an ADP-DnaA complex that is not apt for DNA replication. Binds acidic phospholipids. This chain is Chromosomal replication initiator protein DnaA, found in Photorhabdus laumondii subsp. laumondii (strain DSM 15139 / CIP 105565 / TT01) (Photorhabdus luminescens subsp. laumondii).